The chain runs to 260 residues: Dehydrogenase/reductase SDR family member 11 (260 aa).

The N-terminal stretch at 1–30 (MTRAGMERWRDRLALVTGASGGIGAAVARA) is a signal peptide. Residues 18–23 (GASGGI), 43–44 (RT), glutamate 49, 70–71 (DL), and asparagine 97 each bind NADP(+). Residues serine 151 and tyrosine 166 each coordinate substrate. NADP(+)-binding positions include tyrosine 166, lysine 170, 201–204 (VETQ), and lysine 208. Tyrosine 166 acts as the Proton acceptor in catalysis.

Belongs to the short-chain dehydrogenases/reductases (SDR) family. Homotetramer.

Its subcellular location is the secreted. It carries out the reaction a 3beta-hydroxysteroid + NADP(+) = a 3-oxosteroid + NADPH + H(+). It catalyses the reaction 17beta-estradiol + NAD(+) = estrone + NADH + H(+). The catalysed reaction is 17beta-estradiol + NADP(+) = estrone + NADPH + H(+). Its pathway is steroid biosynthesis; estrogen biosynthesis. With respect to regulation, inhibited by flavonoids including apigenin, luteolin, genistein, kaempferol and quercetin and also by carbenoxolone, zearalenone, glycyrrhetinic, curcumin and flufenamic acid. Catalyzes the conversion of the 17-keto group of estrone, 4- and 5-androstenes and 5-alpha-androstanes into their 17-beta-hydroxyl metabolites and the conversion of the 3-keto group of 3-, 3,17- and 3,20- diketosteroids into their 3-hydroxyl metabolites. Exhibits reductive 3-beta-hydroxysteroid dehydrogenase activity toward 5-beta-androstanes, 5-beta-pregnanes, 4-pregnenes and bile acids. May also reduce endogenous and exogenous alpha-dicarbonyl compounds and xenobiotic alicyclic ketones. The polypeptide is Dehydrogenase/reductase SDR family member 11 (Dhrs11) (Mus musculus (Mouse)).